The primary structure comprises 43 residues: METATLVTISISCLLVSFTGYAIYTSFGRPSEQLRDPFEDHED.

The chain crosses the membrane as a helical span at residues 5 to 27 (TLVTISISCLLVSFTGYAIYTSF).

It belongs to the PsbN family.

It localises to the plastid. It is found in the chloroplast thylakoid membrane. Its function is as follows. May play a role in photosystem I and II biogenesis. This Welwitschia mirabilis (Tree tumbo) protein is Protein PsbN.